A 192-amino-acid polypeptide reads, in one-letter code: GTP-binding protein RHO2 (192 aa).

14–21 (GDGACGKT) is a GTP binding site. An Effector region motif is present at residues 36–44 (YHPTVFENY). GTP contacts are provided by residues 61–65 (DTAGQ) and 119–122 (LKKD). Residue cysteine 188 is the site of S-palmitoyl cysteine attachment. Cysteine 189 bears the Cysteine methyl ester mark. Residue cysteine 189 is the site of S-geranylgeranyl cysteine attachment. Positions 190–192 (IIL) are cleaved as a propeptide — removed in mature form.

This sequence belongs to the small GTPase superfamily. Rho family. Interacts with BEM4.

It localises to the cell membrane. It carries out the reaction GTP + H2O = GDP + phosphate + H(+). This is GTP-binding protein RHO2 (RHO2) from Saccharomyces cerevisiae (strain ATCC 204508 / S288c) (Baker's yeast).